We begin with the raw amino-acid sequence, 24 residues long: Flavin reductase (NADPH) (24 aa).

The NADP(+) site is built by Gly-9, Thr-11, Gly-12, and Thr-14.

It belongs to the BLVRB family. Monomer. As to expression, detected in erythrocytes (at protein level).

The protein localises to the cytoplasm. The enzyme catalyses reduced riboflavin + NADP(+) = riboflavin + NADPH + 2 H(+). It carries out the reaction bilirubin IXbeta + NADP(+) = biliverdin IXbeta + NADPH + H(+). The catalysed reaction is FMNH2 + NAD(+) = FMN + NADH + 2 H(+). It catalyses the reaction FMNH2 + NADP(+) = FMN + NADPH + 2 H(+). The enzyme catalyses S-nitroso-CoA + L-cysteinyl-[protein] = S-nitroso-L-cysteinyl-[protein] + CoA. It carries out the reaction L-cysteinyl-[SCAN] + S-nitroso-CoA = S-nitroso-L-cysteinyl-[SCAN] + CoA. The catalysed reaction is S-nitroso-L-cysteinyl-[SCAN] + L-cysteinyl-[protein] = L-cysteinyl-[SCAN] + S-nitroso-L-cysteinyl-[protein]. Functionally, enzyme that can both act as a NAD(P)H-dependent reductase and a S-nitroso-CoA-dependent nitrosyltransferase. Promotes fetal heme degradation during development. Also expressed in adult tissues, where it acts as a regulator of hematopoiesis, intermediary metabolism (glutaminolysis, glycolysis, TCA cycle and pentose phosphate pathway) and insulin signaling. Has a broad specificity oxidoreductase activity by catalyzing the NAD(P)H-dependent reduction of a variety of flavins, such as riboflavin, FAD or FMN, biliverdins, methemoglobin and PQQ (pyrroloquinoline quinone). Contributes to fetal heme catabolism by catalyzing reduction of biliverdin IXbeta into bilirubin IXbeta in the liver. Biliverdin IXbeta, which constitutes the major heme catabolite in the fetus is not present in adult. Does not reduce bilirubin IXalpha. Can also reduce the complexed Fe(3+) iron to Fe(2+) in the presence of FMN and NADPH. Acts as a protein nitrosyltransferase by catalyzing nitrosylation of cysteine residues of target proteins, such as HMOX2, INSR and IRS1. S-nitroso-CoA-dependent nitrosyltransferase activity is mediated via a 'ping-pong' mechanism: BLVRB first associates with both S-nitroso-CoA and protein substrate, nitric oxide group is then transferred from S-nitroso-CoA to Cys residues of BLVRB and from S-nitroso-BLVRB to the protein substrate. Inhibits insulin signaling by mediating nitrosylation of INSR and IRS1, leading to their inhibition. The chain is Flavin reductase (NADPH) (BLVRB) from Aquarana catesbeiana (American bullfrog).